Here is a 196-residue protein sequence, read N- to C-terminus: GTP cyclohydrolase 1 (196 aa).

Positions 86, 89, and 158 each coordinate Zn(2+).

This sequence belongs to the GTP cyclohydrolase I family. As to quaternary structure, toroid-shaped homodecamer, composed of two pentamers of five dimers.

It catalyses the reaction GTP + H2O = 7,8-dihydroneopterin 3'-triphosphate + formate + H(+). It functions in the pathway cofactor biosynthesis; 7,8-dihydroneopterin triphosphate biosynthesis; 7,8-dihydroneopterin triphosphate from GTP: step 1/1. The chain is GTP cyclohydrolase 1 from Clostridium botulinum (strain ATCC 19397 / Type A).